The following is a 446-amino-acid chain: Deoxyguanosinetriphosphate triphosphohydrolase-like protein (446 aa).

The disordered stretch occupies residues 1 to 28; the sequence is MSSSVWQERRHGEDKQRRNDHRSPFQRD. Residues 7–28 are compositionally biased toward basic and acidic residues; the sequence is QERRHGEDKQRRNDHRSPFQRD. Residues 59–252 enclose the HD domain; the sequence is RLTHSLEVSQ…MELADDIAYA (194 aa).

This sequence belongs to the dGTPase family. Type 2 subfamily.

This chain is Deoxyguanosinetriphosphate triphosphohydrolase-like protein, found in Shewanella sp. (strain MR-7).